Reading from the N-terminus, the 241-residue chain is Carboxy-S-adenosyl-L-methionine synthase (241 aa).

S-adenosyl-L-methionine is bound by residues tyrosine 38, 63-65 (GCS), 88-89 (DN), 116-117 (DI), asparagine 131, and arginine 198.

It belongs to the class I-like SAM-binding methyltransferase superfamily. Cx-SAM synthase family. As to quaternary structure, homodimer.

It carries out the reaction prephenate + S-adenosyl-L-methionine = carboxy-S-adenosyl-L-methionine + 3-phenylpyruvate + H2O. In terms of biological role, catalyzes the conversion of S-adenosyl-L-methionine (SAM) to carboxy-S-adenosyl-L-methionine (Cx-SAM). This is Carboxy-S-adenosyl-L-methionine synthase from Pseudoalteromonas translucida (strain TAC 125).